The sequence spans 118 residues: Large ribosomal subunit protein bL20 (118 aa).

It belongs to the bacterial ribosomal protein bL20 family.

Its function is as follows. Binds directly to 23S ribosomal RNA and is necessary for the in vitro assembly process of the 50S ribosomal subunit. It is not involved in the protein synthesizing functions of that subunit. The sequence is that of Large ribosomal subunit protein bL20 from Sodalis glossinidius (strain morsitans).